The primary structure comprises 542 residues: Membrane protein insertase YidC (542 aa).

6 helical membrane passes run 6 to 26, 326 to 346, 350 to 370, 421 to 441, 458 to 478, and 501 to 521; these read NILL…WQTD, LVVD…LLMF, FVGN…GGLY, GGCL…WVLL, LSVQ…MFLM, and VIFT…WLVG.

This sequence belongs to the OXA1/ALB3/YidC family. Type 1 subfamily. In terms of assembly, interacts with the Sec translocase complex via SecD. Specifically interacts with transmembrane segments of nascent integral membrane proteins during membrane integration.

Its subcellular location is the cell inner membrane. Its function is as follows. Required for the insertion and/or proper folding and/or complex formation of integral membrane proteins into the membrane. Involved in integration of membrane proteins that insert both dependently and independently of the Sec translocase complex, as well as at least some lipoproteins. Aids folding of multispanning membrane proteins. This is Membrane protein insertase YidC from Shewanella frigidimarina (strain NCIMB 400).